The following is a 254-amino-acid chain: DNA repair protein RecO (254 aa).

It belongs to the RecO family.

Involved in DNA repair and RecF pathway recombination. The chain is DNA repair protein RecO from Anaeromyxobacter sp. (strain K).